Consider the following 485-residue polypeptide: Argininosuccinate lyase (485 aa).

Belongs to the lyase 1 family. Argininosuccinate lyase subfamily.

It localises to the cytoplasm. The enzyme catalyses 2-(N(omega)-L-arginino)succinate = fumarate + L-arginine. It participates in amino-acid biosynthesis; L-arginine biosynthesis; L-arginine from L-ornithine and carbamoyl phosphate: step 3/3. In Nitrosopumilus maritimus (strain SCM1), this protein is Argininosuccinate lyase.